Here is a 496-residue protein sequence, read N- to C-terminus: RNA-binding motif protein, Y chromosome, family 1 member A1 (496 aa).

The RRM domain occupies 8–85; sequence GKLFIGGLNR…KAIKVEQAKK (78 aa). Disordered regions lie at residues 78–349 and 452–496; these read IKVE…HRDY and KDQR…SSRY. 2 stretches are compositionally biased toward low complexity: residues 97–114 and 149–159; these read PASS…SARG and PVKRGPSSRSG. The segment covering 175-184 has biased composition (polar residues); it reads NSWMGSQGPM. 6 stretches are compositionally biased toward basic and acidic residues: residues 204 to 214, 242 to 253, 276 to 289, 313 to 326, 335 to 349, and 484 to 496; these read RNDRMSTRHDG, DNGHSNRDEHSS, AYRD…DESY, GYRD…HESY, SSRE…HRDY, and GESR…SSRY.

In terms of assembly, interacts with splicing factor proteins SFRS3/SRP20, TRA2B/SFRS10, KHDRBS1/SAM68 and KHDRBS3. As to expression, testis-specific.

It localises to the nucleus. Its function is as follows. RNA-binding protein involved in pre-mRNA splicing. Required for sperm development. Acts additively with TRA2B to promote exon 7 inclusion of the survival motor neuron SMN. Binds non-specifically to mRNAs. In Homo sapiens (Human), this protein is RNA-binding motif protein, Y chromosome, family 1 member A1 (RBMY1A1).